A 277-amino-acid polypeptide reads, in one-letter code: Large ribosomal subunit protein uL2 (277 aa).

2 disordered regions span residues 37-60 (KNST…GHKH) and 223-265 (VVMN…KRTD). Residues 39-49 (STAGRNSNGHI) show a composition bias toward polar residues. Positions 50–60 (TTRHKGGGHKH) are enriched in basic residues. Residues 229-244 (DHPHGGGEGRTGEARE) are compositionally biased toward basic and acidic residues.

It belongs to the universal ribosomal protein uL2 family. As to quaternary structure, part of the 50S ribosomal subunit. Forms a bridge to the 30S subunit in the 70S ribosome.

Its function is as follows. One of the primary rRNA binding proteins. Required for association of the 30S and 50S subunits to form the 70S ribosome, for tRNA binding and peptide bond formation. It has been suggested to have peptidyltransferase activity; this is somewhat controversial. Makes several contacts with the 16S rRNA in the 70S ribosome. The protein is Large ribosomal subunit protein uL2 of Neisseria meningitidis serogroup C (strain 053442).